The chain runs to 302 residues: Elongation factor Ts (302 aa).

Residues 82 to 85 (TDFV) are involved in Mg(2+) ion dislocation from EF-Tu.

The protein belongs to the EF-Ts family.

The protein resides in the cytoplasm. Functionally, associates with the EF-Tu.GDP complex and induces the exchange of GDP to GTP. It remains bound to the aminoacyl-tRNA.EF-Tu.GTP complex up to the GTP hydrolysis stage on the ribosome. This chain is Elongation factor Ts, found in Nitrosospira multiformis (strain ATCC 25196 / NCIMB 11849 / C 71).